The sequence spans 382 residues: UDP-4-amino-4-deoxy-L-arabinose--oxoglutarate aminotransferase (382 aa).

The residue at position 183 (K183) is an N6-(pyridoxal phosphate)lysine.

This sequence belongs to the DegT/DnrJ/EryC1 family. ArnB subfamily. Homodimer. Pyridoxal 5'-phosphate is required as a cofactor.

The enzyme catalyses UDP-4-amino-4-deoxy-beta-L-arabinose + 2-oxoglutarate = UDP-beta-L-threo-pentopyranos-4-ulose + L-glutamate. It participates in nucleotide-sugar biosynthesis; UDP-4-deoxy-4-formamido-beta-L-arabinose biosynthesis; UDP-4-deoxy-4-formamido-beta-L-arabinose from UDP-alpha-D-glucuronate: step 2/3. It functions in the pathway bacterial outer membrane biogenesis; lipopolysaccharide biosynthesis. In terms of biological role, catalyzes the conversion of UDP-4-keto-arabinose (UDP-Ara4O) to UDP-4-amino-4-deoxy-L-arabinose (UDP-L-Ara4N). The modified arabinose is attached to lipid A and is required for resistance to polymyxin and cationic antimicrobial peptides. The sequence is that of UDP-4-amino-4-deoxy-L-arabinose--oxoglutarate aminotransferase from Pseudomonas syringae pv. syringae (strain B728a).